A 421-amino-acid polypeptide reads, in one-letter code: Cytochrome c biogenesis protein Ccs1 (421 aa).

3 consecutive transmembrane segments (helical) span residues leucine 12–isoleucine 32, threonine 71–leucine 91, and isoleucine 157–serine 177.

It belongs to the Ccs1/CcsB family. May interact with CcsA.

It is found in the plastid. Its subcellular location is the chloroplast thylakoid membrane. In terms of biological role, required during biogenesis of c-type cytochromes (cytochrome c6 and cytochrome f) at the step of heme attachment. The chain is Cytochrome c biogenesis protein Ccs1 from Thalassiosira pseudonana (Marine diatom).